The primary structure comprises 259 residues: Ribonuclease HII (259 aa).

The 189-residue stretch at Val69–Tyr257 folds into the RNase H type-2 domain. The a divalent metal cation site is built by Asp75, Glu76, and Asp167.

The protein belongs to the RNase HII family. It depends on Mn(2+) as a cofactor. The cofactor is Mg(2+).

The protein resides in the cytoplasm. The catalysed reaction is Endonucleolytic cleavage to 5'-phosphomonoester.. In terms of biological role, endonuclease that specifically degrades the RNA of RNA-DNA hybrids. This Shouchella clausii (strain KSM-K16) (Alkalihalobacillus clausii) protein is Ribonuclease HII.